A 182-amino-acid polypeptide reads, in one-letter code: MSRRGQQPPPQQQQAPPQKNQAGKFNPAEFVKPGLTEEEVLEIKEAFDLFDTDGTQSIDPKELKAAMTSLGFEAKNQTIYQMISDLDTDGSGQIDFAEFLKLMTARISERDSKADIQKVFNLFDSERAGVITLKDLRKVAKELGETMDDSELQEMIDRADSDGDAQVTFEDFYNIMTKKTFA.

The segment at 1 to 31 (MSRRGQQPPPQQQQAPPQKNQAGKFNPAEFV) is disordered. EF-hand domains follow at residues 38 to 73 (EEVL…LGFE), 74 to 109 (AKNQ…RISE), 111 to 146 (DSKA…LGET), and 147 to 182 (MDDS…KTFA). Ca(2+) is bound by residues aspartate 51, aspartate 53, threonine 55, serine 57, glutamate 62, aspartate 87, aspartate 89, serine 91, glutamine 93, and glutamate 98.

This sequence belongs to the centrin family.

It is found in the cytoplasm. Its subcellular location is the cytoskeleton. Plays a fundamental role in microtubule organizing center structure and function. Component of the infraciliary lattice (ICL) and the ciliary basal bodies. The sequence is that of Caltractin ICL1b (Icl1b) from Paramecium tetraurelia.